The chain runs to 360 residues: Holliday junction branch migration complex subunit RuvB (360 aa).

The tract at residues Met1–Gln23 is disordered. The tract at residues Pro12–Tyr204 is large ATPase domain (RuvB-L). Residues Leu43, Arg44, Gly85, Lys88, Thr89, Thr90, Glu151–Tyr153, Arg194, Tyr204, and Arg241 each bind ATP. Thr89 serves as a coordination point for Mg(2+). The tract at residues Thr205–Glu275 is small ATPAse domain (RuvB-S). The interval Gln278–Phe360 is head domain (RuvB-H). DNA contacts are provided by Arg333 and Arg338.

Belongs to the RuvB family. As to quaternary structure, homohexamer. Forms an RuvA(8)-RuvB(12)-Holliday junction (HJ) complex. HJ DNA is sandwiched between 2 RuvA tetramers; dsDNA enters through RuvA and exits via RuvB. An RuvB hexamer assembles on each DNA strand where it exits the tetramer. Each RuvB hexamer is contacted by two RuvA subunits (via domain III) on 2 adjacent RuvB subunits; this complex drives branch migration. In the full resolvosome a probable DNA-RuvA(4)-RuvB(12)-RuvC(2) complex forms which resolves the HJ.

It localises to the cytoplasm. The enzyme catalyses ATP + H2O = ADP + phosphate + H(+). Its function is as follows. The RuvA-RuvB-RuvC complex processes Holliday junction (HJ) DNA during genetic recombination and DNA repair, while the RuvA-RuvB complex plays an important role in the rescue of blocked DNA replication forks via replication fork reversal (RFR). RuvA specifically binds to HJ cruciform DNA, conferring on it an open structure. The RuvB hexamer acts as an ATP-dependent pump, pulling dsDNA into and through the RuvAB complex. RuvB forms 2 homohexamers on either side of HJ DNA bound by 1 or 2 RuvA tetramers; 4 subunits per hexamer contact DNA at a time. Coordinated motions by a converter formed by DNA-disengaged RuvB subunits stimulates ATP hydrolysis and nucleotide exchange. Immobilization of the converter enables RuvB to convert the ATP-contained energy into a lever motion, pulling 2 nucleotides of DNA out of the RuvA tetramer per ATP hydrolyzed, thus driving DNA branch migration. The RuvB motors rotate together with the DNA substrate, which together with the progressing nucleotide cycle form the mechanistic basis for DNA recombination by continuous HJ branch migration. Branch migration allows RuvC to scan DNA until it finds its consensus sequence, where it cleaves and resolves cruciform DNA. The sequence is that of Holliday junction branch migration complex subunit RuvB from Koribacter versatilis (strain Ellin345).